Reading from the N-terminus, the 1015-residue chain is Frequency clock protein (1015 aa).

Disordered stretches follow at residues 1–138 (MQPT…SADD), 183–285 (KRKK…QKVD), 352–383 (DFSP…TFSS), 402–465 (HVAG…DPDR), 544–614 (GRKI…VSAS), 629–668 (SPNE…NRRK), 706–728 (ERPD…GSSI), and 895–1015 (SEDD…SSQG). Residues 49 to 68 (SAPPNDSNENSSSPRRASSG) show a composition bias toward low complexity. A compositionally biased stretch (basic and acidic residues) spans 69-80 (ESHETGQSDAKK). The span at 82-95 (FNQSNQNPTATFDS) shows a compositional bias: polar residues. Residues 107-117 (KESDSSNEDKP) show a composition bias toward basic and acidic residues. 3 stretches are compositionally biased toward low complexity: residues 203–216 (SPNT…STTK), 228–267 (SGSG…SGTS), and 356–368 (QQQQ…QQQQ). A compositionally biased stretch (polar residues) spans 369 to 383 (PKSNFITNPGATFSS). Residues 431–442 (NSSSNGNDSGTN) are compositionally biased toward low complexity. Positions 443-453 (PSPPMPPPPEQ) are enriched in pro residues. Residues 454–465 (RPTRPRDLDPDR) are compositionally biased toward basic and acidic residues. Residues 556–570 (TKFSSESSGDLSQRS) show a composition bias toward polar residues. A Nuclear localization signal motif is present at residues 584–588 (HKRQK). A compositionally biased stretch (low complexity) spans 590-600 (GHSTGDSGSSG). The span at 629–643 (SPNEQSSMEDGTLSS) shows a compositional bias: polar residues. Acidic residues-rich tracts occupy residues 895-909 (SEDD…EFNS) and 934-946 (SGDE…EDDI). Residues 976-1003 (GSSRGRSNSASAEAVLRAGGSSAATAGG) are compositionally biased toward low complexity.

Belongs to the FRQ family.

It localises to the nucleus. Circadian clock component involved in the generation of biological rhythms, in particular in rhythm stability, period length, and temperature compensation. Behaves as a negative element in circadian transcriptional loop. This Trichoderma spinulosum (Hypocrea spinulosa) protein is Frequency clock protein (FRQ).